The sequence spans 595 residues: Putative lipase atg15 (595 aa).

Residues methionine 1–aspartate 20 lie on the Cytoplasmic side of the membrane. Residues leucine 21–glycine 41 traverse the membrane as a helical; Signal-anchor for type II membrane protein segment. Over serine 42 to phenylalanine 595 the chain is Lumenal. Asparagine 164, asparagine 199, asparagine 221, asparagine 279, and asparagine 303 each carry an N-linked (GlcNAc...) asparagine glycan. Serine 319 (charge relay system) is an active-site residue. The N-linked (GlcNAc...) asparagine glycan is linked to asparagine 465.

Belongs to the AB hydrolase superfamily. Lipase family. In terms of assembly, binds to both phosphatidylinositol (PI) and phosphatidylinositol 3,5-bisphosphate (PIP2).

Its subcellular location is the endosome. It localises to the multivesicular body membrane. It is found in the prevacuolar compartment membrane. It catalyses the reaction a triacylglycerol + H2O = a diacylglycerol + a fatty acid + H(+). Functionally, lipase which is essential for lysis of subvacuolar cytoplasm to vacuole targeted bodies and intravacuolar autophagic bodies. Involved in the lysis of intravacuolar multivesicular body (MVB) vesicles. The intravacuolar membrane disintegration by atg15 is critical to life span extension. The protein is Putative lipase atg15 (atg15) of Aspergillus niger (strain ATCC MYA-4892 / CBS 513.88 / FGSC A1513).